The sequence spans 196 residues: Chromophore lyase CpcT/CpeT (196 aa).

Belongs to the CpcT/CpeT biliprotein lyase family.

In terms of biological role, covalently attaches a chromophore to Cys residue(s) of phycobiliproteins. The protein is Chromophore lyase CpcT/CpeT of Thermosynechococcus vestitus (strain NIES-2133 / IAM M-273 / BP-1).